The chain runs to 268 residues: Ribosomal RNA small subunit methyltransferase A (268 aa).

Positions 19, 21, 46, 67, 92, and 113 each coordinate S-adenosyl-L-methionine.

This sequence belongs to the class I-like SAM-binding methyltransferase superfamily. rRNA adenine N(6)-methyltransferase family. RsmA subfamily.

The protein resides in the cytoplasm. The enzyme catalyses adenosine(1518)/adenosine(1519) in 16S rRNA + 4 S-adenosyl-L-methionine = N(6)-dimethyladenosine(1518)/N(6)-dimethyladenosine(1519) in 16S rRNA + 4 S-adenosyl-L-homocysteine + 4 H(+). Specifically dimethylates two adjacent adenosines (A1518 and A1519) in the loop of a conserved hairpin near the 3'-end of 16S rRNA in the 30S particle. May play a critical role in biogenesis of 30S subunits. The polypeptide is Ribosomal RNA small subunit methyltransferase A (Tolumonas auensis (strain DSM 9187 / NBRC 110442 / TA 4)).